Here is a 983-residue protein sequence, read N- to C-terminus: Kinesin-like protein KIN-14I (983 aa).

The 123-residue stretch at 44-166 (ASRRYEAANW…CVLAIKSYDE (123 aa)) folds into the Calponin-homology (CH) domain. Polar residues-rich tracts occupy residues 203-214 (SLSRTSSINNEK) and 278-287 (ESTSSQNNRS). Disordered regions lie at residues 203-227 (SLSR…LSSP) and 276-295 (PRES…LGER). The region spanning 399-724 (SIRVYCRVRP…LKFAERVATV (326 aa)) is the Kinesin motor domain. 481-488 (GQTGSGKT) lines the ATP pocket. The stretch at 731-758 (VNNDTSDVKELKEQIATLKAALARKEAE) forms a coiled coil. Disordered stretches follow at residues 802-824 (TVNS…DDRS) and 921-983 (TRSN…NARH). Residues 939 to 951 (SPQSRNNSNNTVS) show a composition bias toward polar residues.

Belongs to the TRAFAC class myosin-kinesin ATPase superfamily. Kinesin family. KIN-14 subfamily.

This chain is Kinesin-like protein KIN-14I, found in Arabidopsis thaliana (Mouse-ear cress).